The chain runs to 304 residues: Ferrochelatase (304 aa).

Positions 169 and 241 each coordinate Fe cation.

It belongs to the ferrochelatase family.

The protein localises to the cytoplasm. The enzyme catalyses heme b + 2 H(+) = protoporphyrin IX + Fe(2+). It participates in porphyrin-containing compound metabolism; protoheme biosynthesis; protoheme from protoporphyrin-IX: step 1/1. Catalyzes the ferrous insertion into protoporphyrin IX. The polypeptide is Ferrochelatase (Thermoplasma volcanium (strain ATCC 51530 / DSM 4299 / JCM 9571 / NBRC 15438 / GSS1)).